The chain runs to 394 residues: Ornithine aminotransferase 1 (394 aa).

Lys252 carries the N6-(pyridoxal phosphate)lysine modification.

This sequence belongs to the class-III pyridoxal-phosphate-dependent aminotransferase family. OAT subfamily. It depends on pyridoxal 5'-phosphate as a cofactor.

It is found in the cytoplasm. The enzyme catalyses a 2-oxocarboxylate + L-ornithine = L-glutamate 5-semialdehyde + an L-alpha-amino acid. It participates in amino-acid biosynthesis; L-proline biosynthesis; L-glutamate 5-semialdehyde from L-ornithine: step 1/1. Catalyzes the interconversion of ornithine to glutamate semialdehyde. The chain is Ornithine aminotransferase 1 from Staphylococcus aureus (strain MRSA252).